The primary structure comprises 359 residues: MPSLLLVVVAALLSSWAQLLTDANSWWSLALNPVQRPEMFIIGAQPVCSQLPGLSPGQRKLCQLYQEHMSYIGEGAKTGIRECQHQFRQRRWNCSTVDNTSVFGRVMQIGSRETAFTYAVSAAGVVNAISRACREGELSTCGCSRAARPKDLPRDWLWGGCGDNVEYGYRFAKEFVDAREREKNFAKGSEEQGRALMNLQNNEAGRRAVYKMADVACKCHGVSGSCSLKTCWLQLAEFRKVGDRLKEKYDSAAAMRITRQGKLELANSRFNQPTPEDLVYVDPSPDYCLRNETTGSLGTQGRLCNKTSEGMDGCELMCCGRGYDRFKSVQVERCHCRFHWCCFVRCKKCTEVVDQYVCK.

Positions 1-17 (MPSLLLVVVAALLSSWA) are cleaved as a signal peptide. A disulfide bridge connects residues C83 and C94. N-linked (GlcNAc...) asparagine glycosylation is found at N93 and N99. Disulfide bonds link C133-C141, C143-C161, C217-C231, C219-C226, C288-C319, C304-C314, C318-C358, C334-C349, C336-C346, and C341-C342. S223 carries O-palmitoleoyl serine; by PORCN lipidation. N-linked (GlcNAc...) asparagine glycans are attached at residues N291 and N305.

It belongs to the Wnt family. In terms of assembly, interacts with PORCN. In terms of processing, palmitoleoylation is required for efficient binding to frizzled receptors. Depalmitoleoylation leads to Wnt signaling pathway inhibition.

It is found in the secreted. It localises to the extracellular space. The protein localises to the extracellular matrix. Ligand for members of the frizzled family of seven transmembrane receptors. Probable developmental protein. May be a signaling molecule which affects the development of discrete regions of tissues. Is likely to signal over only few cell diameters. The chain is Protein Wnt-5b (Wnt5b) from Mus musculus (Mouse).